Reading from the N-terminus, the 421-residue chain is Serine hydroxymethyltransferase (421 aa).

(6S)-5,6,7,8-tetrahydrofolate contacts are provided by residues leucine 121 and 125–127 (GHL). N6-(pyridoxal phosphate)lysine is present on lysine 230. 355 to 357 (SPF) contributes to the (6S)-5,6,7,8-tetrahydrofolate binding site.

This sequence belongs to the SHMT family. Homodimer. Pyridoxal 5'-phosphate is required as a cofactor.

The protein resides in the cytoplasm. It catalyses the reaction (6R)-5,10-methylene-5,6,7,8-tetrahydrofolate + glycine + H2O = (6S)-5,6,7,8-tetrahydrofolate + L-serine. Its pathway is one-carbon metabolism; tetrahydrofolate interconversion. It participates in amino-acid biosynthesis; glycine biosynthesis; glycine from L-serine: step 1/1. Functionally, catalyzes the reversible interconversion of serine and glycine with tetrahydrofolate (THF) serving as the one-carbon carrier. This reaction serves as the major source of one-carbon groups required for the biosynthesis of purines, thymidylate, methionine, and other important biomolecules. Also exhibits THF-independent aldolase activity toward beta-hydroxyamino acids, producing glycine and aldehydes, via a retro-aldol mechanism. This Cellvibrio japonicus (strain Ueda107) (Pseudomonas fluorescens subsp. cellulosa) protein is Serine hydroxymethyltransferase.